A 229-amino-acid polypeptide reads, in one-letter code: Peptidyl-tRNA hydrolase (229 aa).

Tyr-17 lines the tRNA pocket. The active-site Proton acceptor is His-22. Positions 74, 76, and 122 each coordinate tRNA. Residues Ala-194–Thr-229 form a disordered region. Low complexity predominate over residues Thr-207–Pro-223.

Belongs to the PTH family. Monomer.

Its subcellular location is the cytoplasm. It catalyses the reaction an N-acyl-L-alpha-aminoacyl-tRNA + H2O = an N-acyl-L-amino acid + a tRNA + H(+). Hydrolyzes ribosome-free peptidyl-tRNAs (with 1 or more amino acids incorporated), which drop off the ribosome during protein synthesis, or as a result of ribosome stalling. Functionally, catalyzes the release of premature peptidyl moieties from peptidyl-tRNA molecules trapped in stalled 50S ribosomal subunits, and thus maintains levels of free tRNAs and 50S ribosomes. The polypeptide is Peptidyl-tRNA hydrolase (Desulfovibrio desulfuricans (strain ATCC 27774 / DSM 6949 / MB)).